A 104-amino-acid chain; its full sequence is UPF0145 protein cbdbA1711 (104 aa).

The protein belongs to the UPF0145 family.

In Dehalococcoides mccartyi (strain CBDB1), this protein is UPF0145 protein cbdbA1711.